Consider the following 156-residue polypeptide: Small ribosomal subunit protein uS7 (156 aa).

This sequence belongs to the universal ribosomal protein uS7 family. In terms of assembly, part of the 30S ribosomal subunit. Contacts proteins S9 and S11.

Its function is as follows. One of the primary rRNA binding proteins, it binds directly to 16S rRNA where it nucleates assembly of the head domain of the 30S subunit. Is located at the subunit interface close to the decoding center, probably blocks exit of the E-site tRNA. The chain is Small ribosomal subunit protein uS7 from Mycoplasma mobile (strain ATCC 43663 / 163K / NCTC 11711) (Mesomycoplasma mobile).